A 186-amino-acid polypeptide reads, in one-letter code: Putative transcriptional regulator encoded by LINC00473 (186 aa).

The disordered stretch occupies residues 1-62 (MELSAAAGRR…RDCTPTCTNA (62 aa)). The segment covering 18–40 (FTGRHRTERSQERGSTPRKERSM) has biased composition (basic and acidic residues).

In terms of biological role, may play a role in cAMP-mediated gene transcription. The polypeptide is Putative transcriptional regulator encoded by LINC00473 (LINC00473) (Homo sapiens (Human)).